A 201-amino-acid polypeptide reads, in one-letter code: Glycerol-3-phosphate acyltransferase (201 aa).

The next 5 helical transmembrane spans lie at M10–L30, L60–A80, A86–F106, L116–V136, and A166–I186.

Belongs to the PlsY family. In terms of assembly, probably interacts with PlsX.

It is found in the cell inner membrane. The enzyme catalyses an acyl phosphate + sn-glycerol 3-phosphate = a 1-acyl-sn-glycero-3-phosphate + phosphate. Its pathway is lipid metabolism; phospholipid metabolism. In terms of biological role, catalyzes the transfer of an acyl group from acyl-phosphate (acyl-PO(4)) to glycerol-3-phosphate (G3P) to form lysophosphatidic acid (LPA). This enzyme utilizes acyl-phosphate as fatty acyl donor, but not acyl-CoA or acyl-ACP. In Brucella abortus (strain 2308), this protein is Glycerol-3-phosphate acyltransferase.